Consider the following 417-residue polypeptide: Gamma-glutamyl phosphate reductase (417 aa).

Belongs to the gamma-glutamyl phosphate reductase family.

The protein resides in the cytoplasm. The catalysed reaction is L-glutamate 5-semialdehyde + phosphate + NADP(+) = L-glutamyl 5-phosphate + NADPH + H(+). It functions in the pathway amino-acid biosynthesis; L-proline biosynthesis; L-glutamate 5-semialdehyde from L-glutamate: step 2/2. In terms of biological role, catalyzes the NADPH-dependent reduction of L-glutamate 5-phosphate into L-glutamate 5-semialdehyde and phosphate. The product spontaneously undergoes cyclization to form 1-pyrroline-5-carboxylate. The sequence is that of Gamma-glutamyl phosphate reductase from Escherichia coli (strain K12 / MC4100 / BW2952).